We begin with the raw amino-acid sequence, 565 residues long: Cytokinin dehydrogenase 2 (565 aa).

A signal peptide spans 1–20 (MKQEQVRMAVLLMLNCFVKA). N-linked (GlcNAc...) asparagine glycosylation occurs at asparagine 64. One can recognise an FAD-binding PCMH-type domain in the interval 74 to 255 (RLAAAAAVLY…TRARIPLAPA (182 aa)). FAD is bound by residues alanine 108, glycine 110, and glycine 112. Histidine 113 carries the pros-8alpha-FAD histidine modification. FAD-binding residues include serine 114, glutamine 118, aspartate 179, threonine 184, serine 190, isoleucine 194, and isoleucine 245. Residue asparagine 464 is glycosylated (N-linked (GlcNAc...) asparagine). FAD is bound by residues tyrosine 517, serine 554, and glutamine 557.

Belongs to the oxygen-dependent FAD-linked oxidoreductase family. In terms of assembly, monomer. It depends on FAD as a cofactor. In terms of processing, glycosylated. Mostly expressed in leaves, culms, inflorescence meristems, and flowers, especially in vascular tissues.

The protein resides in the secreted. It is found in the extracellular space. The enzyme catalyses N(6)-dimethylallyladenine + A + H2O = 3-methyl-2-butenal + adenine + AH2. In terms of biological role, catalyzes the oxidation of cytokinins, a family of N(6)-substituted adenine derivatives that are plant hormones, where the substituent is an isopentenyl group. Is a major QTL involved in grain yield. Modulates the number of reproductive organs by regulating the cytokinin accumulation in inflorescence meristems. Acts as negative regulator of panicle branching. This chain is Cytokinin dehydrogenase 2, found in Oryza sativa subsp. japonica (Rice).